Here is a 544-residue protein sequence, read N- to C-terminus: Elongator complex protein 3 (544 aa).

Residues 79-369 form the Radical SAM core domain; sequence RTASGIAVVA…YRIQRDIPMP (291 aa). The [4Fe-4S] cluster site is built by cysteine 96, cysteine 106, and cysteine 109. Residues lysine 161, 472 to 475, 495 to 497, and tyrosine 528 contribute to the acetyl-CoA site; these read ELHV and FGT. The region spanning 393-544 is the N-acetyltransferase domain; sequence TKCRDIRARE…LDGPYMSKWL (152 aa).

This sequence belongs to the ELP3 family. Component of the elongator complex. [4Fe-4S] cluster serves as cofactor.

Its subcellular location is the cytoplasm. It catalyses the reaction uridine(34) in tRNA + acetyl-CoA + S-adenosyl-L-methionine + H2O = 5-(carboxymethyl)uridine(34) in tRNA + 5'-deoxyadenosine + L-methionine + CoA + 2 H(+). It functions in the pathway tRNA modification; 5-methoxycarbonylmethyl-2-thiouridine-tRNA biosynthesis. Its function is as follows. Catalytic tRNA acetyltransferase subunit of the elongator complex which is required for multiple tRNA modifications, including mcm5U (5-methoxycarbonylmethyl uridine), mcm5s2U (5-methoxycarbonylmethyl-2-thiouridine), and ncm5U (5-carbamoylmethyl uridine). In the elongator complex, acts as a tRNA uridine(34) acetyltransferase, which mediates formation of carboxymethyluridine in the wobble base at position 34 in tRNAs. The protein is Elongator complex protein 3 of Schizosaccharomyces pombe (strain 972 / ATCC 24843) (Fission yeast).